The following is a 627-amino-acid chain: MAVASVLLALFMLFLSIVTVIGNLAVLLSYYLDKNIRQPTNYFIFSLAISDLLIGLEGIPVYTAFYLNNNEWIWGDVLCDLWLSIDYIVCLASIYTVLGITVDRYYSVKKPATYRNWRTPGRVVLIIIFIWLVPSILFSVSIFGYGTFTGTGRILKETECYVQFMTNPYLNMGMYISYYWTTLFVMLYLYWGIYRAAKKLALKSDQKTKRLALLTEMRRPEVSVRTSDAGNSSSDSPNDTSNSSKCFRTAPPTTTVQTTQTNVGTPPPVFRNHMTLHNNNMDFTKDNEIVRPPTPPDDNTYSNPNFSMISEQLTNGFSRQEPSSVIERESTAPCVSPEPSHASLENEFNENHHAHFKPELSLPFIDADSVSSMVGHDDLRRAMSIRISRSVSMQGTARATPVIEIVENLEEALKICENLEELREDENKNEEEKQKNGLENGGMNHVIIANDEQQPSTSKESEQKEEMTPENHDPNEVKVPLIAVSRVESVKSTAGGKVRRLITQMRSHSIRSKRKANKNKSVLSALNFFQRKKEYKSRSENRARKALRTITFILGSFIILWTPFYVLATIYGFCETCKASPSFNTLYTISYYLCYMNSPLNPFCYAMANQQFKKTLTRIFKGDFRRV.

Over 1–9 (MAVASVLLA) the chain is Extracellular. The chain crosses the membrane as a helical span at residues 10-30 (LFMLFLSIVTVIGNLAVLLSY). At 31–41 (YLDKNIRQPTN) the chain is on the cytoplasmic side. A helical transmembrane segment spans residues 42–62 (YFIFSLAISDLLIGLEGIPVY). At 63–81 (TAFYLNNNEWIWGDVLCDL) the chain is on the extracellular side. Cys-79 and Cys-160 are oxidised to a cystine. Residues 82–102 (WLSIDYIVCLASIYTVLGITV) form a helical membrane-spanning segment. The Cytoplasmic portion of the chain corresponds to 103-122 (DRYYSVKKPATYRNWRTPGR). A helical transmembrane segment spans residues 123 to 143 (VVLIIIFIWLVPSILFSVSIF). Over 144 to 172 (GYGTFTGTGRILKETECYVQFMTNPYLNM) the chain is Extracellular. The helical transmembrane segment at 173–193 (GMYISYYWTTLFVMLYLYWGI) threads the bilayer. Residues 194-549 (YRAAKKLALK…ENRARKALRT (356 aa)) are Cytoplasmic-facing. Disordered stretches follow at residues 222 to 266 (VSVR…VGTP), 423 to 442 (REDE…ENGG), and 449 to 475 (ANDE…HDPN). Positions 231–264 (NSSSDSPNDTSNSSKCFRTAPPTTTVQTTQTNVG) are enriched in low complexity. Positions 459–475 (KESEQKEEMTPENHDPN) are enriched in basic and acidic residues. Residues 550–570 (ITFILGSFIILWTPFYVLATI) form a helical membrane-spanning segment. Topologically, residues 571–586 (YGFCETCKASPSFNTL) are extracellular. A helical transmembrane segment spans residues 587–609 (YTISYYLCYMNSPLNPFCYAMAN). At 610 to 627 (QQFKKTLTRIFKGDFRRV) the chain is on the cytoplasmic side.

The protein belongs to the G-protein coupled receptor 1 family. Muscarinic acetylcholine receptor subfamily. In terms of tissue distribution, expressed in putative sensory neurons, many cells of the ventral cord and in the HSN motor neurons. Expressed in some cholinergic motor neurons and GABAergic motor neurons, which are the two major types of ventral cord motor neurons.

It is found in the cell membrane. It localises to the cell projection. The protein resides in the axon. In terms of biological role, the muscarinic acetylcholine receptor mediates various cellular responses, including inhibition of adenylate cyclase, breakdown of phosphoinositides and modulation of potassium channels through the action of G proteins. Primary transducing effect is Pi turnover. Regulates the activity of ventral cord motor neurons. Couples to the G(o)-alpha G-protein subunit goa-1 to negatively regulate cholinergic receptor activity in the presence of high levels of the neurotransmitter acetylcholine in ventral cord motor neurons. As acetylcholine depolarizes body wall muscles, modulation of acetylcholine levels most likely results in the control locomotory behavior and egg-laying. In Caenorhabditis elegans, this protein is Muscarinic acetylcholine receptor gar-2.